A 338-amino-acid polypeptide reads, in one-letter code: Large ribosomal subunit protein uL10 (338 aa).

The disordered stretch occupies residues 302–338 (IAAQPQPAEEAEEKVEEEEEEEKEEEEALAGLGALFG). Residues 310 to 329 (EEAEEKVEEEEEEEKEEEEA) are compositionally biased toward acidic residues.

Belongs to the universal ribosomal protein uL10 family. Part of the 50S ribosomal subunit. Forms part of the ribosomal stalk which helps the ribosome interact with GTP-bound translation factors. Forms a heptameric L10(L12)2(L12)2(L12)2 complex, where L10 forms an elongated spine to which the L12 dimers bind in a sequential fashion.

Its function is as follows. Forms part of the ribosomal stalk, playing a central role in the interaction of the ribosome with GTP-bound translation factors. This chain is Large ribosomal subunit protein uL10, found in Thermococcus sibiricus (strain DSM 12597 / MM 739).